A 1500-amino-acid chain; its full sequence is Carbamoyl-phosphate synthase [ammonia], mitochondrial (1500 aa).

A mitochondrion-targeting transit peptide spans 1 to 38 (MTRILTACKVVKTLKSGFGLANVTSKRQWDFSRPGIRL). The anthranilate phosphoribosyltransferase homolog stretch occupies residues 39–218 (LSVKAQTAHI…VKVFGKGNPT (180 aa)). An N6-acetyllysine; alternate mark is found at K55, K57, and K119. K55 carries the N6-glutaryllysine; alternate modification. N6-succinyllysine; alternate occurs at positions 55, 57, and 119. S148 carries the post-translational modification Phosphoserine. 2 positions are modified to N6-acetyllysine; alternate: K157 and K171. K157 carries the N6-succinyllysine; alternate modification. At K171 the chain carries N6-glutaryllysine; alternate. Residue K176 is modified to N6-glutaryllysine. K182 is subject to N6-acetyllysine. S189 is subject to Phosphoserine. Residue K197 is modified to N6-acetyllysine. K207, K210, K214, K219, and K228 each carry N6-acetyllysine; alternate. N6-glutaryllysine; alternate is present on residues K207, K210, K214, K219, and K228. K207 carries the N6-succinyllysine; alternate modification. K214 carries the N6-succinyllysine; alternate modification. The region spanning 219 to 404 (KVVAVDCGIK…FSLIKKGKGT (186 aa)) is the Glutamine amidotransferase type-1 domain. At K237 the chain carries N6-glutaryllysine. Residue K279 is modified to N6-acetyllysine. K280, K287, K307, and K310 each carry N6-acetyllysine; alternate. K280 carries the post-translational modification N6-glutaryllysine; alternate. An N6-succinyllysine; alternate mark is found at K287 and K307. K307 and K310 each carry N6-glutaryllysine; alternate. Residue K400 is modified to N6-succinyllysine. Residues K402, K412, K453, and K458 each carry the N6-glutaryllysine; alternate modification. N6-succinyllysine; alternate occurs at positions 402 and 412. K412, K453, K458, K522, K527, and K532 each carry N6-acetyllysine; alternate. An N6-succinyllysine; alternate mark is found at K458, K522, and K527. An N6-glutaryllysine; alternate mark is found at K527 and K532. Residue S537 is modified to Phosphoserine; alternate. An O-linked (GlcNAc) serine; alternate glycan is attached at S537. S540 bears the Phosphoserine mark. Positions 551–743 (SDKLNEINEK…LAFIAAKIAL (193 aa)) constitute an ATP-grasp 1 domain. An N6-acetyllysine; alternate mark is found at K553 and K560. K553 is subject to N6-glutaryllysine; alternate. N6-succinyllysine; alternate occurs at positions 553 and 560. The residue at position 569 (S569) is a Phosphoserine. N6-acetyllysine; alternate occurs at positions 575, 603, and 612. N6-succinyllysine; alternate occurs at positions 575, 603, and 612. K630 is modified (N6-acetyllysine). Position 728 is an N6-glutaryllysine (K728). Residues K751, K757, K772, K793, K811, K831, K841, and K856 each carry the N6-acetyllysine; alternate modification. K751 and K757 each carry N6-succinyllysine; alternate. K757, K772, K793, and K811 each carry N6-glutaryllysine; alternate. Position 793 is an N6-succinyllysine; alternate (K793). Residue K831 is modified to N6-succinyllysine; alternate. N6-glutaryllysine; alternate is present on residues K841 and K856. K869 is subject to N6-glutaryllysine. N6-acetyllysine; alternate is present on residues K875, K889, and K892. Residues K875, K889, and K892 each carry the N6-glutaryllysine; alternate modification. Residues K875, K889, and K892 each carry the N6-succinyllysine; alternate modification. Phosphoserine occurs at positions 896 and 898. Residues K908, K915, and K919 each carry the N6-acetyllysine; alternate modification. Residues K908, K915, and K919 each carry the N6-glutaryllysine; alternate modification. An N6-succinyllysine; alternate mark is found at K915 and K919. Position 935 is an N6-acetyllysine (K935). Phosphoserine is present on S1036. K1074 is modified (N6-acetyllysine; alternate). K1074 carries the N6-glutaryllysine; alternate modification. An N6-succinyllysine; alternate modification is found at K1074. Residues S1079, S1090, and S1093 each carry the phosphoserine modification. Residues 1093-1284 (SAVLDELKVA…FIDVATKVMI (192 aa)) enclose the ATP-grasp 2 domain. At K1100 the chain carries N6-acetyllysine; alternate. Residue K1100 is modified to N6-succinyllysine; alternate. At K1149 the chain carries N6-succinyllysine. K1168 and K1183 each carry N6-acetyllysine; alternate. 2 positions are modified to N6-glutaryllysine; alternate: K1168 and K1183. 2 positions are modified to N6-succinyllysine; alternate: K1168 and K1183. Position 1203 is a phosphoserine (S1203). An N6-acetyllysine modification is found at K1222. Position 1224 is an N6-glutaryllysine (K1224). K1232, K1269, and K1291 each carry N6-acetyllysine; alternate. K1232, K1269, and K1291 each carry N6-succinyllysine; alternate. An O-linked (GlcNAc) serine glycan is attached at S1331. T1332 carries an O-linked (GlcNAc) threonine glycan. The MGS-like domain maps to 1355 to 1500 (FKIPQKGILI…YRQYSAGKAA (146 aa)). K1356 carries the N6-acetyllysine; alternate modification. Residues K1356 and K1360 each carry the N6-glutaryllysine; alternate modification. N6-succinyllysine; alternate occurs at positions 1356 and 1360. T1391, T1394, and W1410 together coordinate N-acetyl-L-glutamate. 2 positions are modified to phosphoserine: S1419 and S1431. Residues N1437 and N1440 each contribute to the N-acetyl-L-glutamate site. The residue at position 1444 (K1444) is an N6-acetyllysine; alternate. The residue at position 1444 (K1444) is an N6-succinyllysine; alternate. N-acetyl-L-glutamate is bound at residue N1449. Residues K1471, K1479, and K1486 each carry the N6-acetyllysine; alternate modification. Residues K1471, K1479, and K1486 each carry the N6-succinyllysine; alternate modification. N6-glutaryllysine; alternate is present on residues K1479 and K1486.

Can form homooligomers (monomers as predominant form and dimers). In terms of processing, 50% of the mature protein that was isolated had Leu-39 as its N-terminal residue and 50% had Ser-40 suggesting two adjacent processing sites. However, the possibility of proteolytic removal of Leu-39 during the isolation of the enzyme cannot be excluded. Undergoes proteolytic cleavage in the C-terminal region corresponding to the loss of approximately 12 AA residues from the C-terminus. Succinylated at Lys-287 and Lys-1291. Desuccinylated at Lys-1291 by SIRT5, leading to activation. Post-translationally, glutarylated. Glutarylation levels increase during fasting. Deglutarylated by SIRT5 at Lys-55, Lys-219, Lys-412, Lys-889, Lys-892, Lys-915, Lys-1360 and Lys-1486, leading to activation. In terms of tissue distribution, primarily in the liver and small intestine.

It is found in the mitochondrion. Its subcellular location is the nucleus. It localises to the nucleolus. The protein resides in the cell membrane. The catalysed reaction is hydrogencarbonate + NH4(+) + 2 ATP = carbamoyl phosphate + 2 ADP + phosphate + 2 H(+). Its activity is regulated as follows. Requires N-acetyl-L-glutamate (NAG) as an allosteric activator. N-acetyl-L-beta-phenylglutamate (Phe-NAG) can also activate CPSase I, but with an activation constant that is 2-fold higher than that for NAG. Its function is as follows. Involved in the urea cycle of ureotelic animals where the enzyme plays an important role in removing excess ammonia from the cell. This Rattus norvegicus (Rat) protein is Carbamoyl-phosphate synthase [ammonia], mitochondrial (Cps1).